Reading from the N-terminus, the 248-residue chain is Probable transcriptional regulatory protein Nwi_2729 (248 aa).

The disordered stretch occupies residues 1-21 (MAGHSQFKNIMHRKGRQDAQK).

The protein belongs to the TACO1 family.

The protein resides in the cytoplasm. This chain is Probable transcriptional regulatory protein Nwi_2729, found in Nitrobacter winogradskyi (strain ATCC 25391 / DSM 10237 / CIP 104748 / NCIMB 11846 / Nb-255).